A 192-amino-acid chain; its full sequence is MSKPSDRINLTNQFLIAMPNMADPTFSGTVVYLCDHSERGALGLVINRPTDIDLESLFNRIDLKLDIEPLLHIPVYFGGPVQTERGFVLHEPVEGASYNSSMSVDGGLEMTTSKDVLEAVATGTGPKRFLLTLGHAGWGAGQLEEEISRNGWLTVAADPRIVFDTPAEERFEAALGLLGVSSSMLSGEAGHA.

It belongs to the UPF0301 (AlgH) family.

This Burkholderia cenocepacia (strain ATCC BAA-245 / DSM 16553 / LMG 16656 / NCTC 13227 / J2315 / CF5610) (Burkholderia cepacia (strain J2315)) protein is UPF0301 protein BceJ2315_30870.